The chain runs to 342 residues: Biotin synthase (342 aa).

A Radical SAM core domain is found at 55-274; the sequence is NAVQCNQLLN…IALARIMMPK (220 aa). 3 residues coordinate [4Fe-4S] cluster: Cys-70, Cys-74, and Cys-77. 4 residues coordinate [2Fe-2S] cluster: Cys-114, Cys-145, Cys-205, and Arg-278.

Belongs to the radical SAM superfamily. Biotin synthase family. In terms of assembly, homodimer. The cofactor is [4Fe-4S] cluster. Requires [2Fe-2S] cluster as cofactor.

The catalysed reaction is (4R,5S)-dethiobiotin + (sulfur carrier)-SH + 2 reduced [2Fe-2S]-[ferredoxin] + 2 S-adenosyl-L-methionine = (sulfur carrier)-H + biotin + 2 5'-deoxyadenosine + 2 L-methionine + 2 oxidized [2Fe-2S]-[ferredoxin]. It functions in the pathway cofactor biosynthesis; biotin biosynthesis; biotin from 7,8-diaminononanoate: step 2/2. Its function is as follows. Catalyzes the conversion of dethiobiotin (DTB) to biotin by the insertion of a sulfur atom into dethiobiotin via a radical-based mechanism. This Rhodopseudomonas palustris (strain BisB5) protein is Biotin synthase.